Here is a 331-residue protein sequence, read N- to C-terminus: Hydroxysteroid dehydrogenase-like protein 1 (331 aa).

A required for mitochondria translocation region spans residues 2–82 (AAVDRFNLLY…TGSTDGIGKA (81 aa)). Residues 74-80 (GSTDGIG) and D125 each bind NADP(+). S205 provides a ligand contact to substrate. Y218 serves as the catalytic Proton acceptor. NADP(+) is bound at residue K222.

It belongs to the short-chain dehydrogenases/reductases (SDR) family. 17-beta-HSD 3 subfamily.

It is found in the mitochondrion. In terms of biological role, may catalyze the metabolism of steroid hormones and thus play an important role in sex differentiation, the emergence and maintenance of the secondary sexual characters, and the regulation of endocrine. This chain is Hydroxysteroid dehydrogenase-like protein 1 (HSDL1), found in Gallus gallus (Chicken).